A 71-amino-acid polypeptide reads, in one-letter code: ATP synthase subunit c (71 aa).

The next 2 membrane-spanning stretches (helical) occupy residues 9–29 (MIGY…IFAA) and 49–69 (LLGF…AFVI).

The protein belongs to the ATPase C chain family. As to quaternary structure, F-type ATPases have 2 components, F(1) - the catalytic core - and F(0) - the membrane proton channel. F(1) has five subunits: alpha(3), beta(3), gamma(1), delta(1), epsilon(1). F(0) has three main subunits: a(1), b(2) and c(10-14). The alpha and beta chains form an alternating ring which encloses part of the gamma chain. F(1) is attached to F(0) by a central stalk formed by the gamma and epsilon chains, while a peripheral stalk is formed by the delta and b chains.

The protein resides in the cell membrane. Functionally, f(1)F(0) ATP synthase produces ATP from ADP in the presence of a proton or sodium gradient. F-type ATPases consist of two structural domains, F(1) containing the extramembraneous catalytic core and F(0) containing the membrane proton channel, linked together by a central stalk and a peripheral stalk. During catalysis, ATP synthesis in the catalytic domain of F(1) is coupled via a rotary mechanism of the central stalk subunits to proton translocation. Its function is as follows. Key component of the F(0) channel; it plays a direct role in translocation across the membrane. A homomeric c-ring of between 10-14 subunits forms the central stalk rotor element with the F(1) delta and epsilon subunits. This chain is ATP synthase subunit c, found in Micrococcus luteus (strain ATCC 4698 / DSM 20030 / JCM 1464 / CCM 169 / CCUG 5858 / IAM 1056 / NBRC 3333 / NCIMB 9278 / NCTC 2665 / VKM Ac-2230) (Micrococcus lysodeikticus).